The sequence spans 440 residues: MSHEEDLIDYSDEELQTTDAAATTAAPASNGEAKKGDLTVSGGRPDKKGSYVGIHSTGFRDFLLKEELLRAITDCGFEHPSEVQQVCIPTAILNVDVLCQAKSGLGKTAVFVLTTLHQLEPVPGECSILVMCHTRELAYQIKNEYARFSKYLPDVKTAVFYGGTPIQKDVELLSNKESYPNIVVGTPGRLNALVRDKKLSLRNVKAFVLDECDKMLDQIDMRRDVQEIFRATPADKQVMMFSATLSQEIRPVCKKFMRNPLEVYVDDDTKLTLHGLQQYYIKLSEAEKNRKLNELLDSLEFNQVIIFVKSTLRANELDKLLRECNFPSIAVHSGVSQEERIKRYKEFKEFNKRICVATDVFGRGIDIERINLAINYDLPADADSYLHRVGRAGRFGTKGLSISFVSTEDDEKVLKDIEKRFEVALPEYPEGGVDSSTYMA.

The span at 1–16 (MSHEEDLIDYSDEELQ) shows a compositional bias: acidic residues. The segment at 1 to 42 (MSHEEDLIDYSDEELQTTDAAATTAAPASNGEAKKGDLTVSG) is disordered. The span at 17–28 (TTDAAATTAAPA) shows a compositional bias: low complexity. The short motif at 57–85 (TGFRDFLLKEELLRAITDCGFEHPSEVQQ) is the Q motif element. Residues 88–263 (IPTAILNVDV…KKFMRNPLEV (176 aa)) form the Helicase ATP-binding domain. 101-108 (AKSGLGKT) is a binding site for ATP. Positions 210–213 (DECD) match the DEAD box motif. Residues 291–436 (KLNELLDSLE…EYPEGGVDSS (146 aa)) enclose the Helicase C-terminal domain.

Belongs to the DEAD box helicase family. DECD subfamily.

The protein resides in the nucleus. The catalysed reaction is ATP + H2O = ADP + phosphate + H(+). In terms of biological role, ATP-binding RNA helicase involved in transcription elongation and required for the export of mRNA out of the nucleus. SUB2 also plays a role in pre-mRNA splicing and spliceosome assembly. May be involved in rDNA and telomeric silencing, and maintenance of genome integrity. The protein is ATP-dependent RNA helicase sub2 (sub2) of Aspergillus niger (strain ATCC MYA-4892 / CBS 513.88 / FGSC A1513).